Reading from the N-terminus, the 358-residue chain is Protein RecA (358 aa).

67–74 (GPESSGKT) lines the ATP pocket.

This sequence belongs to the RecA family.

The protein resides in the cytoplasm. Can catalyze the hydrolysis of ATP in the presence of single-stranded DNA, the ATP-dependent uptake of single-stranded DNA by duplex DNA, and the ATP-dependent hybridization of homologous single-stranded DNAs. It interacts with LexA causing its activation and leading to its autocatalytic cleavage. This Xenorhabdus nematophila (strain ATCC 19061 / DSM 3370 / CCUG 14189 / LMG 1036 / NCIMB 9965 / AN6) protein is Protein RecA.